A 143-amino-acid chain; its full sequence is Large ribosomal subunit protein uL13c (143 aa).

The protein belongs to the universal ribosomal protein uL13 family. In terms of assembly, part of the 50S ribosomal subunit.

Its subcellular location is the plastid. It is found in the chloroplast. In Gracilaria tenuistipitata var. liui (Red alga), this protein is Large ribosomal subunit protein uL13c.